The following is a 496-amino-acid chain: tRNA-2-methylthio-N(6)-dimethylallyladenosine synthase (496 aa).

In terms of domain architecture, MTTase N-terminal spans 10–126; the sequence is RTYEVRTYGC…LPALLERARV (117 aa). Residues C19, C55, C89, C163, C167, and C170 each contribute to the [4Fe-4S] cluster site. The region spanning 149-380 is the Radical SAM core domain; the sequence is RESAYAAWVS…ALVNEIAWEE (232 aa). In terms of domain architecture, TRAM spans 382-451; that stretch reads KRLVGRRVEL…PHHLVADGPV (70 aa). Positions 465 to 496 are disordered; sequence ARNAAPAPSSGVTLGMPTVGAPAPLPDAPACR. The span at 487 to 496 shows a compositional bias: pro residues; sequence APLPDAPACR.

Belongs to the methylthiotransferase family. MiaB subfamily. Monomer. Requires [4Fe-4S] cluster as cofactor.

The protein localises to the cytoplasm. The enzyme catalyses N(6)-dimethylallyladenosine(37) in tRNA + (sulfur carrier)-SH + AH2 + 2 S-adenosyl-L-methionine = 2-methylsulfanyl-N(6)-dimethylallyladenosine(37) in tRNA + (sulfur carrier)-H + 5'-deoxyadenosine + L-methionine + A + S-adenosyl-L-homocysteine + 2 H(+). Its function is as follows. Catalyzes the methylthiolation of N6-(dimethylallyl)adenosine (i(6)A), leading to the formation of 2-methylthio-N6-(dimethylallyl)adenosine (ms(2)i(6)A) at position 37 in tRNAs that read codons beginning with uridine. In Nocardioides sp. (strain ATCC BAA-499 / JS614), this protein is tRNA-2-methylthio-N(6)-dimethylallyladenosine synthase.